We begin with the raw amino-acid sequence, 312 residues long: 2,3-dihydroxyphenylpropionate/2,3-dihydroxicinnamic acid 1,2-dioxygenase 1 (312 aa).

H115 serves as the catalytic Proton donor. Catalysis depends on H179, which acts as the Proton acceptor.

Belongs to the LigB/MhpB extradiol dioxygenase family. Homotetramer. It depends on Fe(2+) as a cofactor.

The enzyme catalyses 3-(2,3-dihydroxyphenyl)propanoate + O2 = (2Z,4E)-2-hydroxy-6-oxonona-2,4-dienedioate + H(+). The catalysed reaction is (2E)-3-(2,3-dihydroxyphenyl)prop-2-enoate + O2 = (2Z,4E,7E)-2-hydroxy-6-oxonona-2,4,7-trienedioate + H(+). The protein operates within aromatic compound metabolism; 3-phenylpropanoate degradation. Functionally, catalyzes the non-heme iron(II)-dependent oxidative cleavage of 2,3-dihydroxyphenylpropionic acid and 2,3-dihydroxicinnamic acid into 2-hydroxy-6-ketononadienedioate and 2-hydroxy-6-ketononatrienedioate, respectively. The protein is 2,3-dihydroxyphenylpropionate/2,3-dihydroxicinnamic acid 1,2-dioxygenase 1 of Dechloromonas aromatica (strain RCB).